A 98-amino-acid chain; its full sequence is Large ribosomal subunit protein uL23 (98 aa).

The protein belongs to the universal ribosomal protein uL23 family. In terms of assembly, part of the 50S ribosomal subunit. Contacts protein L29, and trigger factor when it is bound to the ribosome.

Functionally, one of the early assembly proteins it binds 23S rRNA. One of the proteins that surrounds the polypeptide exit tunnel on the outside of the ribosome. Forms the main docking site for trigger factor binding to the ribosome. The protein is Large ribosomal subunit protein uL23 of Rickettsia canadensis (strain McKiel).